The following is a 457-amino-acid chain: Serine--tRNA ligase (457 aa).

252 to 254 (TAE) is a binding site for L-serine. ATP is bound by residues 283-285 (RKE) and V299. E306 contributes to the L-serine binding site. Residue 370–373 (EMVS) coordinates ATP. Position 406 (T406) interacts with L-serine.

This sequence belongs to the class-II aminoacyl-tRNA synthetase family. Type-1 seryl-tRNA synthetase subfamily. In terms of assembly, homodimer. The tRNA molecule binds across the dimer.

It is found in the cytoplasm. It catalyses the reaction tRNA(Ser) + L-serine + ATP = L-seryl-tRNA(Ser) + AMP + diphosphate + H(+). The catalysed reaction is tRNA(Sec) + L-serine + ATP = L-seryl-tRNA(Sec) + AMP + diphosphate + H(+). The protein operates within aminoacyl-tRNA biosynthesis; selenocysteinyl-tRNA(Sec) biosynthesis; L-seryl-tRNA(Sec) from L-serine and tRNA(Sec): step 1/1. Catalyzes the attachment of serine to tRNA(Ser). Is also able to aminoacylate tRNA(Sec) with serine, to form the misacylated tRNA L-seryl-tRNA(Sec), which will be further converted into selenocysteinyl-tRNA(Sec). This is Serine--tRNA ligase from Saccharolobus solfataricus (strain ATCC 35092 / DSM 1617 / JCM 11322 / P2) (Sulfolobus solfataricus).